The following is a 224-amino-acid chain: ATP-dependent dethiobiotin synthetase BioD (224 aa).

14 to 19 provides a ligand contact to ATP; sequence GIGKTV. Thr18 contributes to the Mg(2+) binding site. Lys39 is a catalytic residue. Ser43 contributes to the substrate binding site. Residues Asp56, 117–120, and 177–178 contribute to the ATP site; these read EGVG and NE. 2 residues coordinate Mg(2+): Asp56 and Glu117.

The protein belongs to the dethiobiotin synthetase family. In terms of assembly, homodimer. Mg(2+) is required as a cofactor.

Its subcellular location is the cytoplasm. The enzyme catalyses (7R,8S)-7,8-diammoniononanoate + CO2 + ATP = (4R,5S)-dethiobiotin + ADP + phosphate + 3 H(+). It participates in cofactor biosynthesis; biotin biosynthesis; biotin from 7,8-diaminononanoate: step 1/2. Its function is as follows. Catalyzes a mechanistically unusual reaction, the ATP-dependent insertion of CO2 between the N7 and N8 nitrogen atoms of 7,8-diaminopelargonic acid (DAPA, also called 7,8-diammoniononanoate) to form a ureido ring. The chain is ATP-dependent dethiobiotin synthetase BioD from Xanthomonas campestris pv. campestris (strain ATCC 33913 / DSM 3586 / NCPPB 528 / LMG 568 / P 25).